The chain runs to 913 residues: Sterol uptake control protein 2 (913 aa).

Positions 50 to 80 (GCDNCKRRRVKCDEGKPACRKCTNMKLECQY) form a DNA-binding region, zn(2)-C6 fungal-type. 2 disordered regions span residues 103 to 173 (GSVE…SMGL) and 216 to 258 (GNMG…LAGS). T122 bears the Phosphothreonine mark. The span at 150-164 (SESEEKSSAPIEDKN) shows a compositional bias: basic and acidic residues. Over residues 222–241 (QLQQQQQVQQQSQPQTQAQQ) the composition is skewed to low complexity. Positions 303-346 (QQHQQVQLQQYQQLRQEQHQQVQQQQQEQLQQYQQHFLQQQQQV) form a coiled coil. Disordered stretches follow at residues 347–385 (LLQQ…TLNS) and 453–489 (MQEH…GSAS). A compositionally biased stretch (polar residues) spans 374–385 (LQSQTSETTLNS). The stretch at 440 to 472 (ATKASNAEEALANMQEHHERAAASVKENDGQLS) forms a coiled coil. Residues 454 to 468 (QEHHERAAASVKEND) show a composition bias toward basic and acidic residues. Residues 469 to 487 (GQLSDTKSPAPSNNAQGGS) are compositionally biased toward polar residues. S519 bears the Phosphoserine mark. Residues 552–562 (EPTISLQTSQT) show a composition bias toward polar residues. Positions 552 to 571 (EPTISLQTSQTENEDDASRQ) are disordered.

Its subcellular location is the nucleus. Functionally, transcription factor that is involved in activation of anaerobic genes such as DAN/TIR cell wall mannoprotein genes and YML083c. Appears to bind to anaerobic response elements (AR1) with the consensus sequence 5'-TCGTTYAG-3' present in the promoter regions of DAN/TIR genes. Involved in sterol uptake and regulation of the sterol biosynthesis. Binds to sterol regulatory elements (SRE) with the consensus sequence 5'-TCGTATA-3' present in ERG2 and ERG3 promoters. May be involved in down-regulation of CWP2 during anaerobic adaptation. This is Sterol uptake control protein 2 (UPC2) from Saccharomyces cerevisiae (strain ATCC 204508 / S288c) (Baker's yeast).